We begin with the raw amino-acid sequence, 421 residues long: Gamma-glutamyl phosphate reductase (421 aa).

It belongs to the gamma-glutamyl phosphate reductase family.

It localises to the cytoplasm. It catalyses the reaction L-glutamate 5-semialdehyde + phosphate + NADP(+) = L-glutamyl 5-phosphate + NADPH + H(+). It functions in the pathway amino-acid biosynthesis; L-proline biosynthesis; L-glutamate 5-semialdehyde from L-glutamate: step 2/2. Its function is as follows. Catalyzes the NADPH-dependent reduction of L-glutamate 5-phosphate into L-glutamate 5-semialdehyde and phosphate. The product spontaneously undergoes cyclization to form 1-pyrroline-5-carboxylate. The protein is Gamma-glutamyl phosphate reductase of Acinetobacter baylyi (strain ATCC 33305 / BD413 / ADP1).